We begin with the raw amino-acid sequence, 172 residues long: Adenine phosphoribosyltransferase (172 aa).

This sequence belongs to the purine/pyrimidine phosphoribosyltransferase family. In terms of assembly, homodimer.

The protein localises to the cytoplasm. It carries out the reaction AMP + diphosphate = 5-phospho-alpha-D-ribose 1-diphosphate + adenine. It participates in purine metabolism; AMP biosynthesis via salvage pathway; AMP from adenine: step 1/1. Functionally, catalyzes a salvage reaction resulting in the formation of AMP, that is energically less costly than de novo synthesis. In Crocosphaera subtropica (strain ATCC 51142 / BH68) (Cyanothece sp. (strain ATCC 51142)), this protein is Adenine phosphoribosyltransferase.